Reading from the N-terminus, the 292-residue chain is Cyclin-dependent-like kinase 5 (292 aa).

Residues 4-286 (YDKMEKIGEG…ADAALRHAYF (283 aa)) form the Protein kinase domain. ATP is bound by residues 10 to 18 (IGEGTYGTV) and K33. The active-site Proton acceptor is D126. Residues N131 and D144 each coordinate Mg(2+).

Belongs to the protein kinase superfamily. CMGC Ser/Thr protein kinase family. CDC2/CDKX subfamily. In terms of assembly, heterodimer composed of a catalytic subunit cdk-5 and a regulatory subunit cdka-1. Interaction with cdka-1 is required for cdk-5 activation. Requires Mg(2+) as cofactor.

The protein localises to the cytoplasm. Its subcellular location is the cell projection. It is found in the dendrite. It carries out the reaction L-seryl-[protein] + ATP = O-phospho-L-seryl-[protein] + ADP + H(+). The catalysed reaction is L-threonyl-[protein] + ATP = O-phospho-L-threonyl-[protein] + ADP + H(+). Functionally, proline-directed serine/threonine-protein kinase which, in several motor neurons, promotes the polarized trafficking of synaptic vesicles and dense-core vesicles (DCV). In the ventral nerve cord, phosphorylates lin-10 and thereby prevents lin-10-mediated anterograde trafficking of the glutamate receptor glr-1. Involved in the inhibition of glr-1 trafficking in hypoxic conditions. In DA motor neurons but not in DB motor neurons, regulates axonal transport of synaptic vesicle precursors by inhibiting dynein-mediated retrograde transport. Regulates the trafficking of dense-core vesicles in DA and DB motor neurons by promoting anterograde trafficking to the axon and preventing dynein-dependent trafficking to the dendrite. May regulate these processes in association with cdka-1/p35. Activity may be regulated by cyy-1. Involved in synapse formation during DD motor neuron remodeling by regulating transport of disassembled synaptic material to the new synaptic sites probably by activating the motor protein unc-104/kinesin-3. Regulates microtubule polarity in the dendrite of DB motor neurons. May also play a role in GABAergic synaptic vesicle localization in the ventral nerve cord. This Caenorhabditis elegans protein is Cyclin-dependent-like kinase 5.